The primary structure comprises 974 residues: Localization factor PodJL (974 aa).

Coiled coils occupy residues 81-163 (DEVG…EAAG), 218-320 (VARL…SAQA), and 375-469 (QAQA…LEAA). Disordered stretches follow at residues 460 to 497 (SEAQ…SPFE) and 589 to 611 (AAAR…KKEK). The span at 589–598 (AAARAAAASE) shows a compositional bias: low complexity. A helical transmembrane segment spans residues 642–662 (ALVVFAAAGALGAGVGGLLLL). 3 Sel1-like repeats span residues 757–793 (PAAQ…NGGD), 794–829 (PRAM…DMGL), and 830–865 (VDSQ…RAGD).

Post-translationally, two isoforms exist, the full-length translation product PodJL and a C-terminal truncated form PodJS. Both appear during a specific time period of the cell cycle to control different aspects of polar organelle development.

It is found in the membrane. Functionally, podJL provides the positional information for the localization of several polar organelles (pili, adhesive holdfast and chemotactic apparatus) by recruiting structural (CpaE) and regulatory (PleC) proteins to a specific cell pole. In Caulobacter vibrioides (strain ATCC 19089 / CIP 103742 / CB 15) (Caulobacter crescentus), this protein is Localization factor PodJL (podJ).